The following is a 73-amino-acid chain: Protein SlyX homolog (73 aa).

It belongs to the SlyX family.

This Haemophilus ducreyi (strain 35000HP / ATCC 700724) protein is Protein SlyX homolog.